The sequence spans 422 residues: Mitogen-activated protein kinase spm1 (422 aa).

The Protein kinase domain maps to 21-314; the sequence is FKVVKELGQG…VDDALEHPYL (294 aa). Residues 27-35 and Lys52 each bind ATP; that span reads LGQGAYGIV. The active-site Proton acceptor is the Asp149. The residue at position 186 (Thr186) is a Phosphothreonine. The short motif at 186–188 is the TXY element; that stretch reads TEY. A Phosphotyrosine modification is found at Tyr188. The disordered stretch occupies residues 359 to 422; the sequence is RRRSHPTNPT…DHKSDDNRHN (64 aa). The span at 364-379 shows a compositional bias: polar residues; sequence PTNPTVNIPQPAQTVP. Residues 380–397 are compositionally biased toward low complexity; it reads SNDNGSFNVSSSSSSQTS. Residues 411–422 are compositionally biased toward basic and acidic residues; that stretch reads AIDHKSDDNRHN.

Belongs to the protein kinase superfamily. CMGC Ser/Thr protein kinase family. MAP kinase subfamily. Mg(2+) is required as a cofactor. Post-translationally, dually phosphorylated on Thr-186 and Tyr-188, which activates the enzyme.

It carries out the reaction L-seryl-[protein] + ATP = O-phospho-L-seryl-[protein] + ADP + H(+). The enzyme catalyses L-threonyl-[protein] + ATP = O-phospho-L-threonyl-[protein] + ADP + H(+). Its activity is regulated as follows. Activated by tyrosine and threonine phosphorylation by skh1/pek1. Its function is as follows. Regulates cell integrity and functions coordinately with the protein kinase C pathway (pck1 and pck2). Involved the regulation of wall architecture, cell shape, cytokinesis in exponential and stationary phase, and metabolism of ions. The sequence is that of Mitogen-activated protein kinase spm1 (spm1) from Schizosaccharomyces pombe (strain 972 / ATCC 24843) (Fission yeast).